A 173-amino-acid chain; its full sequence is Alpha-crystallin A chain (173 aa).

Methionine 1 is modified (N-acetylmethionine). The required for complex formation with BFSP1 and BFSP2 stretch occupies residues 1–63 (MDIAIQQPWF…RTVLDSGVSE (63 aa)). Glutamine 6 bears the Deamidated glutamine; partial mark. Serine 45 is modified (phosphoserine). Glutamine 50 bears the Deamidated glutamine; partial mark. Residues 52-162 (LFRTVLDSGV…GHSERAIPVS (111 aa)) form the sHSP domain. Lysine 70 and lysine 99 each carry N6-acetyllysine. A Zn(2+)-binding site is contributed by histidine 100. Asparagine 101 is modified (deamidated asparagine; partial). Residues glutamate 102 and histidine 107 each contribute to the Zn(2+) site. The residue at position 122 (serine 122) is a Phosphoserine. Asparagine 123 bears the Deamidated asparagine; partial mark. Residues 144–173 (PKVPSGVDAGHSERAIPVSREEKPSSAPSS) form a disordered region. Residues 153–167 (GHSERAIPVSREEKP) show a composition bias toward basic and acidic residues. Histidine 154 lines the Zn(2+) pocket. Residue serine 162 is glycosylated (O-linked (GlcNAc) serine).

This sequence belongs to the small heat shock protein (HSP20) family. In terms of assembly, heteromer composed of three CRYAA and one CRYAB subunits. Inter-subunit bridging via zinc ions enhances stability, which is crucial as there is no protein turn over in the lens. Can also form homodimers and homotetramers (dimers of dimers) which serve as the building blocks of homooligomers. Within homooligomers, the zinc-binding motif is created from residues of 3 different molecules. His-100 and Glu-102 from one molecule are ligands of the zinc ion, and His-107 and His-154 residues from additional molecules complete the site with tetrahedral coordination geometry. Part of a complex required for lens intermediate filament formation composed of BFSP1, BFSP2 and CRYAA. In terms of processing, acetylation at Lys-70 may increase chaperone activity. Post-translationally, undergoes age-dependent proteolytical cleavage at the C-terminus.

It is found in the cytoplasm. The protein localises to the nucleus. In terms of biological role, contributes to the transparency and refractive index of the lens. Acts as a chaperone, preventing aggregation of various proteins under a wide range of stress conditions. Required for the correct formation of lens intermediate filaments as part of a complex composed of BFSP1, BFSP2 and CRYAA. This is Alpha-crystallin A chain (CRYAA) from Neovison vison (American mink).